The sequence spans 226 residues: DELTA-thalatoxin-Avl1b (226 aa).

Residues 1–21 (MRHFVVFLYMFLALSIPTAFA) form the signal peptide. Positions 22–45 (KKHIVTKKGNHQDITNDNEGENAE) are excised as a propeptide. The segment at 50 to 59 (AVAGAVIAGG) is plays an important role in the hemolytic activity. Positions 58–77 (GGELALKILTKILDEIGKID) are N-terminal region. Phosphocholine contacts are provided by serine 101, valine 134, serine 152, proline 154, tyrosine 180, and tyrosine 184. The segment at 152-167 (SVPFDYNLYTNWWNVK) is trp-rich region, which is important for the binding to lipid membrane. A Cell attachment site, crucial for protein stability motif is present at residues 191 to 193 (KPS).

The protein belongs to the actinoporin family. Sea anemone subfamily. In terms of assembly, octamer or nonamer in membranes. Monomer in the soluble state.

The protein resides in the secreted. Its subcellular location is the nematocyst. It localises to the target cell membrane. In terms of biological role, pore-forming protein that forms cations-selective hydrophilic pores of around 1 nm and causes cytolysis. Pore formation is a multi-step process that involves specific recognition of membrane sphingomyelin (but neither cholesterol nor phosphatidylcholine) using aromatic rich region and adjacent phosphocholine (POC) binding site, firm binding to the membrane (mainly driven by hydrophobic interactions) accompanied by the transfer of the N-terminal region to the lipid-water interface and finally pore formation after oligomerization of monomers. The chain is DELTA-thalatoxin-Avl1b from Actineria villosa (Okinawan sea anemone).